The following is a 338-amino-acid chain: Transferrin receptor subunit ESAG7 (338 aa).

The signal sequence occupies residues 1-17; that stretch reads MRFWFVLLALLGKEIYA. N-linked (GlcNAc...) asparagine glycosylation is found at Asn26 and Asn110. Cystine bridges form between Cys34–Cys161, Cys84–Cys311, Cys144–Cys215, and Cys230–Cys247. Residue Asn234 is glycosylated (N-linked (GlcNAc...) asparagine).

Heterodimer composed of ESAG6 and ESAG7. N-glycosylated. Glycosylation is dispensable for heterodimer formation and host transferrin binding.

Its subcellular location is the cell membrane. The protein resides in the flagellar pocket. Transferrin receptor subunit involved in receptor-mediated acquisition of iron from the environment by binding host TF/transferrin. In Trypanosoma brucei brucei, this protein is Transferrin receptor subunit ESAG7.